Here is a 692-residue protein sequence, read N- to C-terminus: Meiotic sister-chromatid recombination protein 6, mitochondrial (692 aa).

The transit peptide at 1–30 (MLSHNALRAFDCSKVIISRRCLTSSTSIYQ) directs the protein to the mitochondrion.

It is found in the mitochondrion. In terms of biological role, may be involved in the control of meiotic sister-chromatid recombination. In Saccharomyces cerevisiae (strain ATCC 204508 / S288c) (Baker's yeast), this protein is Meiotic sister-chromatid recombination protein 6, mitochondrial (MSC6).